A 422-amino-acid polypeptide reads, in one-letter code: C-type lectin domain family 4 member M (422 aa).

Residues 1–49 (MSDSKEPRVQPLGLLEEDPTTSGIRLFPRDFQFQQTHGHKSSTGCLGHG) lie on the Cytoplasmic side of the membrane. Positions 14–15 (LL) match the Endocytosis signal motif. Residues 50–70 (PLVLQLLSFALLAGVLVAILV) traverse the membrane as a helical; Signal-anchor for type II membrane protein segment. Topologically, residues 71–422 (QVYKVPSSLS…KKPIACFRDE (352 aa)) are extracellular. Residue Asn-92 is glycosylated (N-linked (GlcNAc...) asparagine). 8 tandem repeats follow at residues 108-130 (KLQEIYQELTQLKAAVGELPEKS), 131-151 (KQQEIYQELTQLKASVGELPE), 154-176 (QLQEIYQELTRLKAAVGELPEES), 177-199 (RLQEIYQELTRLKAAVGELPEKS), 200-222 (RLQEIYQELTRLKAAVGELPEKS), 223-245 (RLQEIYQELTRLKAAVGELPEKS), 246-268 (KLQEIYQELTRLKAAVGELPDQS), and 269-291 (KQQQIYQELTDLKTAFERLCCRC). An 8 X approximate tandem repeats region spans residues 108–292 (KLQEIYQELT…AFERLCCRCP (185 aa)). 4 disulfides stabilise this stretch: Cys-288–Cys-418, Cys-291–Cys-302, Cys-319–Cys-412, and Cys-391–Cys-404. Residues 297-413 (FFQGNCYFMS…CNVDNYWICK (117 aa)) form the C-type lectin domain. Residues Glu-382, Asn-384, Ser-386, Glu-389, Asn-400, and Asp-401 each coordinate Ca(2+). Asn-384 carries an N-linked (GlcNAc...) asparagine glycan.

In terms of assembly, homotetramer.

The protein localises to the membrane. Probable pathogen-recognition receptor involved in peripheral immune surveillance in liver. May mediate the endocytosis of pathogens which are subsequently degraded in lysosomal compartments. Probably recognizes in a calcium-dependent manner high mannose N-linked oligosaccharides in a variety of pathogen antigens. Is a receptor for ICAM3, probably by binding to mannose-like carbohydrates. In Symphalangus syndactylus (Siamang), this protein is C-type lectin domain family 4 member M (CLEC4M).